Consider the following 627-residue polypeptide: 1-deoxy-D-xylulose-5-phosphate synthase (627 aa).

Thiamine diphosphate-binding positions include histidine 76 and 117–119 (SHA). Mg(2+) is bound at residue aspartate 148. Residues 149–150 (GA), asparagine 178, phenylalanine 288, and glutamate 370 each bind thiamine diphosphate. Asparagine 178 is a Mg(2+) binding site.

The protein belongs to the transketolase family. DXPS subfamily. As to quaternary structure, homodimer. Mg(2+) serves as cofactor. It depends on thiamine diphosphate as a cofactor.

It carries out the reaction D-glyceraldehyde 3-phosphate + pyruvate + H(+) = 1-deoxy-D-xylulose 5-phosphate + CO2. It participates in metabolic intermediate biosynthesis; 1-deoxy-D-xylulose 5-phosphate biosynthesis; 1-deoxy-D-xylulose 5-phosphate from D-glyceraldehyde 3-phosphate and pyruvate: step 1/1. Its function is as follows. Catalyzes the acyloin condensation reaction between C atoms 2 and 3 of pyruvate and glyceraldehyde 3-phosphate to yield 1-deoxy-D-xylulose-5-phosphate (DXP). The chain is 1-deoxy-D-xylulose-5-phosphate synthase from Cutibacterium acnes (strain DSM 16379 / KPA171202) (Propionibacterium acnes).